Here is a 202-residue protein sequence, read N- to C-terminus: MSRYRGPRLRITRRLGDLPGLTRKAAKRSYPPGQHGQARRKRSEYAIRLEEKQKLRFNYGVSERQLVRYVKKARAQEGSTGTNLLKLLENRLDNVCFRLGFGPTVPGARQLVNHGHVTVNGRVTDIASYQCKPGDVIAIRERKCSKQLAEGNLEFPGLANVPPHLELDKPKLNAKVVGRCEREWVALEINELLVVEYYSRKV.

The tract at residues leucine 15–arginine 42 is disordered. Positions asparagine 90–asparagine 152 constitute an S4 RNA-binding domain.

Belongs to the universal ribosomal protein uS4 family. In terms of assembly, part of the 30S ribosomal subunit. Contacts protein S5. The interaction surface between S4 and S5 is involved in control of translational fidelity.

In terms of biological role, one of the primary rRNA binding proteins, it binds directly to 16S rRNA where it nucleates assembly of the body of the 30S subunit. With S5 and S12 plays an important role in translational accuracy. The chain is Small ribosomal subunit protein uS4 from Synechococcus sp. (strain WH7803).